Reading from the N-terminus, the 210-residue chain is uncharacterized protein (210 aa).

Residues 1 to 17 (MKRTAVSLCLLTGLLSG) form the signal peptide. C18 is lipidated: N-palmitoyl cysteine. A lipid anchor (S-diacylglycerol cysteine) is attached at C18. Residues 176–195 (EMKTSPQGSPVSENENANGE) show a composition bias toward polar residues. The disordered stretch occupies residues 176–210 (EMKTSPQGSPVSENENANGETRQDMKIDRNDKNAR). Residues 196–210 (TRQDMKIDRNDKNAR) show a composition bias toward basic and acidic residues.

It localises to the cell membrane. This is an uncharacterized protein from Bacillus subtilis (strain 168).